Consider the following 175-residue polypeptide: Thioredoxin-like protein CITRX, chloroplastic (175 aa).

The transit peptide at 1–73 directs the protein to the chloroplast; that stretch reads MQAASLAFHP…REDYLVKKLS (73 aa). A Thioredoxin domain is found at 74 to 175; that stretch reads AKEIQELIKG…MMRDIINNDL (102 aa). Catalysis depends on nucleophile residues Cys-98 and Cys-101. Cys-98 and Cys-101 are disulfide-bonded.

The protein belongs to the thioredoxin family. Plant CITRX-type subfamily.

The protein resides in the plastid. Its subcellular location is the chloroplast. In terms of biological role, probable thiol-disulfide oxidoreductase that may play a role in proper chloroplast development. This chain is Thioredoxin-like protein CITRX, chloroplastic, found in Solanum tuberosum (Potato).